The sequence spans 172 residues: RNA silencing suppressor p19 (172 aa).

Composition is skewed to basic and acidic residues over residues 1–14 (MERA…REQA) and 150–172 (SERE…EESE). 2 disordered regions span residues 1 to 34 (MERA…KLPD) and 145 to 172 (LQPT…EESE).

This sequence belongs to the tombusvirus protein p19 family. As to quaternary structure, homodimer.

Its function is as follows. Viral suppressor of RNA silencing which binds specifically to silencing RNAs (siRNAs). Acts as a molecular caliper to specifically select siRNAs based on the length of the duplex region of the RNA. In Cymbidium ringspot virus (CymRSV), this protein is RNA silencing suppressor p19.